The sequence spans 424 residues: MFVDRARIYIKAGDGGDGAISFHREKYISKGGPDGGDGGKGGDVIFVVDEGLRTLQDFRYKTRYRAEDGQNGGSSNCSGRSGEDLIIKVPPGTLVKDEQTGRILADLVKPGKKVVIAKGGKGGAGNQHFATPTRQVPSFAKPGEPGEELWVILELKLLADVGLIGFPNVGKSTILSMVTAAQPKIANYHFTTINPNLGVVNIDAENAFVMADIPGLIEGAHQGVGLGHEFLKHIERTKLLIHVVDISGSEGRDPVQDFEVINEELKKYNPVLCERPQIIAANKMDVTGAEENLEKFRKVIEPRGYKIFPVSAASNKGLKELIYYAAQKLKELPDTVLVNDQDNEVVYTAVEEEPFNIRKENGVFVVEGSWVQRLVRSVNFDNYESLQYFQRAIRRKGIVDALESMGINEGDTVRMYDLEFEYFR.

Residues 1 to 158 (MFVDRARIYI…LWVILELKLL (158 aa)) enclose the Obg domain. In terms of domain architecture, OBG-type G spans 159-330 (ADVGLIGFPN…LIYYAAQKLK (172 aa)). Residues 165–172 (GFPNVGKS), 190–194 (FTTIN), 212–215 (DIPG), 282–285 (NKMD), and 311–313 (SAA) each bind GTP. Mg(2+) is bound by residues Ser172 and Thr192. The OCT domain maps to 347–424 (YTAVEEEPFN…MYDLEFEYFR (78 aa)).

Belongs to the TRAFAC class OBG-HflX-like GTPase superfamily. OBG GTPase family. As to quaternary structure, monomer. The cofactor is Mg(2+).

The protein resides in the cytoplasm. An essential GTPase which binds GTP, GDP and possibly (p)ppGpp with moderate affinity, with high nucleotide exchange rates and a fairly low GTP hydrolysis rate. Plays a role in control of the cell cycle, stress response, ribosome biogenesis and in those bacteria that undergo differentiation, in morphogenesis control. In Acetivibrio thermocellus (strain ATCC 27405 / DSM 1237 / JCM 9322 / NBRC 103400 / NCIMB 10682 / NRRL B-4536 / VPI 7372) (Clostridium thermocellum), this protein is GTPase Obg.